The sequence spans 465 residues: Cysteine--tRNA ligase (465 aa).

Residue Cys29 coordinates Zn(2+). Positions 31-41 match the 'HIGH' region motif; that stretch reads PTVYNYIHIGN. Zn(2+) is bound by residues Cys209, His234, and Glu238. The 'KMSKS' region motif lies at 266–270; that stretch reads KMSKS. Lys269 serves as a coordination point for ATP. At Ser270 the chain carries Phosphoserine.

It belongs to the class-I aminoacyl-tRNA synthetase family. In terms of assembly, monomer. It depends on Zn(2+) as a cofactor.

Its subcellular location is the cytoplasm. The catalysed reaction is tRNA(Cys) + L-cysteine + ATP = L-cysteinyl-tRNA(Cys) + AMP + diphosphate. The sequence is that of Cysteine--tRNA ligase from Bacillus cereus (strain 03BB102).